We begin with the raw amino-acid sequence, 180 residues long: UPF0690 protein C1orf52 homolog (180 aa).

Disordered regions lie at residues 1 to 66 (MAAE…SVTR) and 96 to 180 (KIWK…KKKK). A compositionally biased stretch (basic and acidic residues) spans 48–61 (KQAEKRLPGPDELF). Thr-65 is modified (phosphothreonine). Phosphotyrosine is present on Tyr-130. Acidic residues predominate over residues 149–160 (EGEETVESDDDK). Residue Ser-156 is modified to Phosphoserine. Residues 161–180 (DERASKIRRVEPGEAAKKKK) show a composition bias toward basic and acidic residues.

It belongs to the UPF0690 family.

The sequence is that of UPF0690 protein C1orf52 homolog from Mus musculus (Mouse).